Reading from the N-terminus, the 146-residue chain is Envelope protein OPG155 (146 aa).

The helical; Signal-anchor for type III membrane protein transmembrane segment at 1 to 21 (MNSLSIFFIVVATAAVCLLFI) threads the bilayer. Topologically, residues 22–146 (QGYSIYENYG…AECQFLKSVL (125 aa)) are intravirion.

The protein belongs to the orthopoxvirus OPG155 protein family. In terms of assembly, part of a stable entry-fusion complex (EFC) which is at least composed of proteins OPG143, OPG147, OPG155, OPG086, OPG094, OPG107, OPG104, and OPG099. Formation of the viral membrane is necessary for the assembly of the complex. Interacts directly with protein OPG107. In terms of processing, contains two intramolecular disulfide bonds. They are created by the viral disulfide bond formation pathway, a poxvirus-specific pathway that operates on the cytoplasmic side of the MV membranes.

Its subcellular location is the virion membrane. Functionally, envelope protein required for virus entry into host cell and for cell-cell fusion (syncytium formation). In Vaccinia virus (strain Ankara) (VACV), this protein is Envelope protein OPG155 (OPG155).